A 265-amino-acid polypeptide reads, in one-letter code: Hydroxyethylthiazole kinase (265 aa).

Met-50 serves as a coordination point for substrate. ATP contacts are provided by Arg-125 and Thr-171. Gly-198 provides a ligand contact to substrate.

The protein belongs to the Thz kinase family. The cofactor is Mg(2+).

It catalyses the reaction 5-(2-hydroxyethyl)-4-methylthiazole + ATP = 4-methyl-5-(2-phosphooxyethyl)-thiazole + ADP + H(+). The protein operates within cofactor biosynthesis; thiamine diphosphate biosynthesis; 4-methyl-5-(2-phosphoethyl)-thiazole from 5-(2-hydroxyethyl)-4-methylthiazole: step 1/1. In terms of biological role, catalyzes the phosphorylation of the hydroxyl group of 4-methyl-5-beta-hydroxyethylthiazole (THZ). This chain is Hydroxyethylthiazole kinase, found in Salmonella agona (strain SL483).